We begin with the raw amino-acid sequence, 311 residues long: Homoserine kinase (311 aa).

96-106 (PLARGLGSSAA) is an ATP binding site.

The protein belongs to the GHMP kinase family. Homoserine kinase subfamily.

Its subcellular location is the cytoplasm. It carries out the reaction L-homoserine + ATP = O-phospho-L-homoserine + ADP + H(+). It functions in the pathway amino-acid biosynthesis; L-threonine biosynthesis; L-threonine from L-aspartate: step 4/5. In terms of biological role, catalyzes the ATP-dependent phosphorylation of L-homoserine to L-homoserine phosphate. The sequence is that of Homoserine kinase from Natranaerobius thermophilus (strain ATCC BAA-1301 / DSM 18059 / JW/NM-WN-LF).